The primary structure comprises 364 residues: Dihydroflavonol 4-reductase (364 aa).

Positions 45 and 164 each coordinate NADP(+).

The protein belongs to the NAD(P)-dependent epimerase/dehydratase family. Dihydroflavonol-4-reductase subfamily.

It catalyses the reaction a (2R,3S,4S)-leucoanthocyanidin + NADP(+) = a (2R,3R)-dihydroflavonol + NADPH + H(+). The enzyme catalyses (2S)-flavan-4-ol + NADP(+) = (2S)-flavanone + NADPH + H(+). It functions in the pathway pigment biosynthesis; anthocyanin biosynthesis. Its function is as follows. Bifunctional enzyme involved in flavonoid metabolism. The polypeptide is Dihydroflavonol 4-reductase (F) (Callistephus chinensis (China aster)).